The chain runs to 753 residues: MPVLWLADVDKNDIPLVGGKGANLGELLRAEIPVPDGFVVDARTFREFIQKTGIAEKIYSLLRELDVEDTEKLDAVSREIREIIEKTEMPEDIEREIREAYRKLCEEEGKEVYVAVRSSATAEDLPDASFAGQQETYLNVVGEDEVVEKVKKCWGSLFTPRAIYYRVQKGFRHEDVSIAVVVQKMVNSEKSGVMFTSHPVSGEKKCIIEAVFGLGEAIVSGLVTPDTYVYDRVKRKIEEVKIGEKKFMLTRKDGKTVKVELPPEKANERVLSDEEIEKLVTLGELIEDHYGKPQDVEWAIEGGKIYIVQSRPITTIRKEKKEAEEEVSEEAEGKILLKGLGASPGIASGKVKVIFSEKEISKVEEGDILVTTMTTPDMVPAMKRAAAIVTDEGGMTCHAAIVSRELGVPAVVGTKVATKVLKDGMVVTVDGEKGIVYEGRIEKKEEPKPVVASAPIITATEVKVNISIPDVAERVARETNADGVGLFRIEHMVLGLEKHPMKFIRDGEIDRYIDLLYQEMKKVVKAFYPKPVWIRTIDAPTDEFRAMEGGEDEPIEANPMLGFRGIRRDLAEEEHFRAEMRAIKKLVDEGYTNVGVMLPLITSPEEVKRAKEIAISEGLPLDKIEFGVMVETPAAALILEDIIKEGIDFVSLGTNDLTQYTLAVDRNNENVAYLYNETHPAVLKLIERTIKVCKEHGVKSSICGQAGSYPHVVEKLVEFGIDSVSANPDAVQRIREVVARAEKRIILEKLRKI.

His-398 (tele-phosphohistidine intermediate) is an active-site residue. Arg-488, Arg-535, Glu-631, Gly-653, Thr-654, Asn-655, and Asp-656 together coordinate substrate. Glu-631 is a binding site for Mg(2+). Asp-656 provides a ligand contact to Mg(2+). Residue Cys-703 is the Proton donor of the active site.

Belongs to the PEP-utilizing enzyme family. It depends on Mg(2+) as a cofactor.

The enzyme catalyses pyruvate + ATP + H2O = phosphoenolpyruvate + AMP + phosphate + 2 H(+). It functions in the pathway carbohydrate biosynthesis; gluconeogenesis. Its function is as follows. Catalyzes the phosphorylation of pyruvate to phosphoenolpyruvate. This is Probable phosphoenolpyruvate synthase (ppsA) from Archaeoglobus fulgidus (strain ATCC 49558 / DSM 4304 / JCM 9628 / NBRC 100126 / VC-16).